We begin with the raw amino-acid sequence, 445 residues long: Tripartite motif-containing protein 43B (445 aa).

The RING-type zinc-finger motif lies at 16 to 57 (CSICQGIFMNPVYLKCGHKFCEACLLLFQEDIKFPAYCPMCM). The B box-type zinc finger occupies 88–129 (SEEHKCVTHKAKKMIFCDKSKILLCHLCSDSQEHSGHTHCSI). Residues Cys-93, His-96, Cys-115, and His-121 each contribute to the Zn(2+) site. A B30.2/SPRY domain is found at 271-445 (RLRAHSIPGL…VRPFFSAVYT (175 aa)).

It belongs to the TRIM/RBCC family.

The sequence is that of Tripartite motif-containing protein 43B from Mus musculus (Mouse).